Consider the following 124-residue polypeptide: Large ribosomal subunit protein bL12 (124 aa).

Belongs to the bacterial ribosomal protein bL12 family. Homodimer. Part of the ribosomal stalk of the 50S ribosomal subunit. Forms a multimeric L10(L12)X complex, where L10 forms an elongated spine to which 2 to 4 L12 dimers bind in a sequential fashion. Binds GTP-bound translation factors.

Its function is as follows. Forms part of the ribosomal stalk which helps the ribosome interact with GTP-bound translation factors. Is thus essential for accurate translation. The sequence is that of Large ribosomal subunit protein bL12 from Nautilia profundicola (strain ATCC BAA-1463 / DSM 18972 / AmH).